Reading from the N-terminus, the 205-residue chain is Large ribosomal subunit protein uL4 (205 aa).

Residues 47–70 (TRAQKSRAEVSGGGKKPFRQKGTG) form a disordered region.

This sequence belongs to the universal ribosomal protein uL4 family. In terms of assembly, part of the 50S ribosomal subunit.

One of the primary rRNA binding proteins, this protein initially binds near the 5'-end of the 23S rRNA. It is important during the early stages of 50S assembly. It makes multiple contacts with different domains of the 23S rRNA in the assembled 50S subunit and ribosome. Its function is as follows. Forms part of the polypeptide exit tunnel. The polypeptide is Large ribosomal subunit protein uL4 (Acinetobacter baylyi (strain ATCC 33305 / BD413 / ADP1)).